Reading from the N-terminus, the 319-residue chain is MIGLIITATISVTLIMVLLVVAGTFTWVERRLLGFVQERLGPNRVGPFGSLQWIADTVKILTKEDRPPPGADKFAYILAPAVAATPVLAGFGVIEFGDGLSLAAVDVGVLFLIGMLGLTAYAVVLGAWASHSRFALMGGMRAAAQMLAYEVFLGLSLMGAVMLAGSLSMNAIVEAQRDVWFVVLQPLGAALFCIAGVAAAHRLPFDLPESENDLVAGFMTEYTGMSFGLFFLGEYLAVLLVSALAVTLFFGGWLGPWLPGPIWFGLKTGVIAVVFVWLRATLPRPRYDQLLSFAWKIALPLSLANLLLTGIVVVARSAS.

A run of 8 helical transmembrane segments spans residues 1–21, 74–94, 107–127, 147–167, 179–199, 238–258, 262–282, and 293–313; these read MIGL…LLVV, FAYI…FGVI, VGVL…VLGA, LAYE…AGSL, VWFV…GVAA, VLLV…GPWL, IWFG…RATL, and FAWK…GIVV.

This sequence belongs to the complex I subunit 1 family. As to quaternary structure, NDH-1 is composed of 14 different subunits. Subunits NuoA, H, J, K, L, M, N constitute the membrane sector of the complex.

Its subcellular location is the cell inner membrane. The catalysed reaction is a quinone + NADH + 5 H(+)(in) = a quinol + NAD(+) + 4 H(+)(out). Its function is as follows. NDH-1 shuttles electrons from NADH, via FMN and iron-sulfur (Fe-S) centers, to quinones in the respiratory chain. The immediate electron acceptor for the enzyme in this species is believed to be ubiquinone. Couples the redox reaction to proton translocation (for every two electrons transferred, four hydrogen ions are translocated across the cytoplasmic membrane), and thus conserves the redox energy in a proton gradient. This subunit may bind ubiquinone. The protein is NADH-quinone oxidoreductase subunit H 1 of Rhodopseudomonas palustris (strain BisB5).